The sequence spans 116 residues: Large ribosomal subunit protein bL19 (116 aa).

Belongs to the bacterial ribosomal protein bL19 family.

Its function is as follows. This protein is located at the 30S-50S ribosomal subunit interface and may play a role in the structure and function of the aminoacyl-tRNA binding site. This is Large ribosomal subunit protein bL19 from Pasteurella multocida (strain Pm70).